The primary structure comprises 274 residues: Glutamate racemase (274 aa).

Substrate is bound by residues 9 to 10 (DS) and 41 to 42 (YG). Residue Cys73 is the Proton donor/acceptor of the active site. Residue 74–75 (NT) coordinates substrate. The active-site Proton donor/acceptor is Cys183. Position 184–185 (184–185 (TH)) interacts with substrate.

The protein belongs to the aspartate/glutamate racemases family.

The catalysed reaction is L-glutamate = D-glutamate. It participates in cell wall biogenesis; peptidoglycan biosynthesis. Its function is as follows. Provides the (R)-glutamate required for cell wall biosynthesis. In Shewanella baltica (strain OS185), this protein is Glutamate racemase.